Reading from the N-terminus, the 224-residue chain is MASSSSLYLLAALLALASWQAIAFDPSPLQDFCVADMKSPVRVNGFPCKNPMEVNSDDFFNAAKFDMPRSTMNKVGSNVTNLNVLNFPGLNTLGISLARIDYAPLGVNPPHIHPRATELLTVLEGTLYVGFVTSNPNRLFSKVVHKGDTFVFPKAMIHFQMNLDHNKPAVAQSSLNSQNPGVITIASAVFGSKPPISDDVLTKAFQVEKKVIDWLKSQFWESNY.

The N-terminal stretch at 1-23 (MASSSSLYLLAALLALASWQAIA) is a signal peptide. Cysteines 33 and 48 form a disulfide. The region spanning 70-213 (STMNKVGSNV…AFQVEKKVID (144 aa)) is the Cupin type-1 domain. N-linked (GlcNAc...) asparagine glycosylation is present at Asn-78. Positions 111, 113, 118, and 158 each coordinate Mn(2+).

This sequence belongs to the germin family. As to quaternary structure, oligomer (believed to be a pentamer but probably hexamer).

Its subcellular location is the secreted. The protein resides in the extracellular space. It is found in the apoplast. Functionally, plays a role in broad-spectrum disease resistance. Probably has no oxalate oxidase activity even if the active site is conserved. In Oryza sativa subsp. japonica (Rice), this protein is Germin-like protein 8-4 (GER1).